The chain runs to 296 residues: Ethanolamine ammonia-lyase small subunit (296 aa).

Residues valine 209 and glutamate 230 each contribute to the adenosylcob(III)alamin site.

The protein belongs to the EutC family. As to quaternary structure, the basic unit is a heterodimer which dimerizes to form tetramers. The heterotetramers trimerize; 6 large subunits form a core ring with 6 small subunits projecting outwards. The cofactor is adenosylcob(III)alamin.

It is found in the bacterial microcompartment. The catalysed reaction is ethanolamine = acetaldehyde + NH4(+). It participates in amine and polyamine degradation; ethanolamine degradation. In terms of biological role, catalyzes the deamination of various vicinal amino-alcohols to oxo compounds. Allows this organism to utilize ethanolamine as the sole source of nitrogen and carbon in the presence of external vitamin B12. This Lachnoclostridium phytofermentans (strain ATCC 700394 / DSM 18823 / ISDg) (Clostridium phytofermentans) protein is Ethanolamine ammonia-lyase small subunit.